A 606-amino-acid polypeptide reads, in one-letter code: EPM2A-interacting protein 1 (606 aa).

Ser-147 carries the phosphoserine modification.

Interacts with EPM2A.

The protein resides in the endoplasmic reticulum. The polypeptide is EPM2A-interacting protein 1 (Epm2aip1) (Mus musculus (Mouse)).